A 416-amino-acid chain; its full sequence is Phosphoglycerate kinase (416 aa).

(2R)-3-phosphoglycerate is bound by residues valine 23, aspartate 24, phenylalanine 25, asparagine 26, arginine 39, serine 62, histidine 63, glycine 65, arginine 66, leucine 121, arginine 122, histidine 169, and arginine 170. An ADP-binding site is contributed by glycine 213. Residue glycine 213 participates in CDP binding. AMP is bound by residues alanine 214 and lysine 215. Alanine 214 contacts ATP. Alanine 214 provides a ligand contact to Mg(2+). Aspartate 218 contacts CDP. Residue aspartate 218 coordinates Mg(2+). Residue lysine 219 coordinates AMP. Lysine 219 is an ATP binding site. An ADP-binding site is contributed by glycine 237. Glycine 237 is a binding site for CDP. Residues glycine 238 and glycine 312 each coordinate AMP. ATP contacts are provided by glycine 238 and glycine 312. The CDP site is built by glycine 337 and phenylalanine 342. An ADP-binding site is contributed by phenylalanine 342. Glutamate 343 is a binding site for AMP. ATP is bound by residues glutamate 343, aspartate 374, and threonine 375. Aspartate 374 contacts Mg(2+).

It belongs to the phosphoglycerate kinase family. In terms of assembly, monomer. Requires Mg(2+) as cofactor.

It localises to the cytoplasm. Its subcellular location is the mitochondrion. The enzyme catalyses (2R)-3-phosphoglycerate + ATP = (2R)-3-phospho-glyceroyl phosphate + ADP. It functions in the pathway carbohydrate degradation; glycolysis; pyruvate from D-glyceraldehyde 3-phosphate: step 2/5. Catalyzes one of the two ATP producing reactions in the glycolytic pathway via the reversible conversion of 1,3-diphosphoglycerate to 3-phosphoglycerate. Both L- and D- forms of purine and pyrimidine nucleotides can be used as substrates, but the activity is much lower on pyrimidines. Negatively regulates the biosynthesis of acetyl-CoA from pyruvate in the mitochondrion. This chain is Phosphoglycerate kinase (pgkA), found in Agaricus bisporus (White button mushroom).